The primary structure comprises 182 residues: Photosystem I assembly protein Ycf4 (182 aa).

Transmembrane regions (helical) follow at residues 22 to 42 (WSSV…SSYL) and 63 to 83 (VMCF…LTIF).

This sequence belongs to the Ycf4 family.

Its subcellular location is the plastid. It localises to the chloroplast thylakoid membrane. Functionally, seems to be required for the assembly of the photosystem I complex. The polypeptide is Photosystem I assembly protein Ycf4 (Oltmannsiellopsis viridis (Marine flagellate)).